The chain runs to 156 residues: MIALIQRVSQARVTVDGRTTGEIGAGLLALVCAERGDTEAQAERLLAKLLSYRVFSDAEGRMNLPVQNMDGQGNAGGLLVVSQFTLAADTNSGTRPSFTPAAAPEDGRRLYDHFVTRARAAHPSVQTGEFGAMMQVSLTNDGPVTFWLRVPPAANA.

The Gly-cisPro motif, important for rejection of L-amino acids motif lies at 142 to 143 (GP).

Belongs to the DTD family. In terms of assembly, homodimer.

The protein resides in the cytoplasm. It carries out the reaction glycyl-tRNA(Ala) + H2O = tRNA(Ala) + glycine + H(+). The enzyme catalyses a D-aminoacyl-tRNA + H2O = a tRNA + a D-alpha-amino acid + H(+). Its function is as follows. An aminoacyl-tRNA editing enzyme that deacylates mischarged D-aminoacyl-tRNAs. Also deacylates mischarged glycyl-tRNA(Ala), protecting cells against glycine mischarging by AlaRS. Acts via tRNA-based rather than protein-based catalysis; rejects L-amino acids rather than detecting D-amino acids in the active site. By recycling D-aminoacyl-tRNA to D-amino acids and free tRNA molecules, this enzyme counteracts the toxicity associated with the formation of D-aminoacyl-tRNA entities in vivo and helps enforce protein L-homochirality. This Cupriavidus metallidurans (strain ATCC 43123 / DSM 2839 / NBRC 102507 / CH34) (Ralstonia metallidurans) protein is D-aminoacyl-tRNA deacylase.